The primary structure comprises 486 residues: MNLPAVTPAKSDTASPMGEIIAVREAVVDVRFAAGHLPEINSALEVAWDGGAPLILEVHSHLDPRTVRAVALMSTSGLARHVMVRATGEALRVPVGEAVVGRMLDVTGIPRDNGPALPADVPRRAIHSDPPAMQTENASTDIFETGVKVLDLLTPLAHGGKAAMFGGAGVGKTVLTMELIHAMAAKYQGLSIFTGVGERSREGHEMLSDMNGSGVIRHAVLVYGQMNEPPGARWRVPLTALAIAEYFRDEQHKNVLLLMDNIYRFVQAGSELSSLLGRLPSRVGYQSTLATEVGAVEERITSVAGAAVTAIQTVYVPADDFTDPAVTAIATHMDSQIVLSRDLAAQGFYPAVDPLASSSVLLDPLVVGDAHCEIAEQVRESLARLKSLQDVIALLGVEELGSDDRRTVTRARRLQRFLSQPFTVTEKFTGQPGRSVSLADTLAGCRAILDGETDDWAESSLYMVGTLDEARQKEQVARKAAAGAAV.

Residue 166 to 173 (GGAGVGKT) participates in ATP binding.

This sequence belongs to the ATPase alpha/beta chains family. F-type ATPases have 2 components, CF(1) - the catalytic core - and CF(0) - the membrane proton channel. CF(1) has five subunits: alpha(3), beta(3), gamma(1), delta(1), epsilon(1). CF(0) has three main subunits: a(1), b(2) and c(9-12). The alpha and beta chains form an alternating ring which encloses part of the gamma chain. CF(1) is attached to CF(0) by a central stalk formed by the gamma and epsilon chains, while a peripheral stalk is formed by the delta and b chains.

The protein localises to the cell inner membrane. It catalyses the reaction ATP + H2O + 4 H(+)(in) = ADP + phosphate + 5 H(+)(out). Produces ATP from ADP in the presence of a proton gradient across the membrane. The catalytic sites are hosted primarily by the beta subunits. This is ATP synthase subunit beta 2 from Gluconobacter oxydans (strain 621H) (Gluconobacter suboxydans).